The sequence spans 393 residues: 8-amino-7-oxononanoate synthase (393 aa).

Residue 107–108 (GF) participates in pyridoxal 5'-phosphate binding. Position 132 (His132) interacts with substrate. Pyridoxal 5'-phosphate contacts are provided by residues Ser180, 205–208 (DDAH), and 236–239 (TLSK). Residue Lys239 is modified to N6-(pyridoxal phosphate)lysine. Residue Thr353 participates in substrate binding.

It belongs to the class-II pyridoxal-phosphate-dependent aminotransferase family. BioF subfamily. In terms of assembly, homodimer. The cofactor is pyridoxal 5'-phosphate.

The enzyme catalyses 6-carboxyhexanoyl-[ACP] + L-alanine + H(+) = (8S)-8-amino-7-oxononanoate + holo-[ACP] + CO2. It functions in the pathway cofactor biosynthesis; biotin biosynthesis. Catalyzes the decarboxylative condensation of pimeloyl-[acyl-carrier protein] and L-alanine to produce 8-amino-7-oxononanoate (AON), [acyl-carrier protein], and carbon dioxide. The sequence is that of 8-amino-7-oxononanoate synthase from Coprothermobacter proteolyticus (strain ATCC 35245 / DSM 5265 / OCM 4 / BT).